A 107-amino-acid chain; its full sequence is Nucleoid-associated protein BLi00029/BL02358 (107 aa).

A disordered region spans residues 1–27; that stretch reads MRGGMGNMQKMMKQMQKMQKDMQKAQE. The segment covering 8–17 has biased composition (low complexity); it reads MQKMMKQMQK. A compositionally biased stretch (basic and acidic residues) spans 18 to 27; sequence MQKDMQKAQE.

Belongs to the YbaB/EbfC family. In terms of assembly, homodimer.

The protein resides in the cytoplasm. It is found in the nucleoid. Its function is as follows. Binds to DNA and alters its conformation. May be involved in regulation of gene expression, nucleoid organization and DNA protection. This Bacillus licheniformis (strain ATCC 14580 / DSM 13 / JCM 2505 / CCUG 7422 / NBRC 12200 / NCIMB 9375 / NCTC 10341 / NRRL NRS-1264 / Gibson 46) protein is Nucleoid-associated protein BLi00029/BL02358.